The following is a 536-amino-acid chain: Hydroxylamine oxidoreductase (536 aa).

The signal sequence occupies residues 1-26 (MFEIFKKPLSRIVGATFAFAGVTLLA). Positions 116, 119, 120, 136, 160, 163, 164, 168, 179, 182, 183, 198, 223, 226, 227, 234, 237, 238, 241, 254, 257, and 258 each coordinate heme c. His263 provides a ligand contact to hydroxylamine. Residues His274, Cys301, Cys304, His305, His311, Cys346, Cys349, His350, His443, and Tyr451 each coordinate heme c.

Homotrimer; subunits are linked by two covalent bonds between Tyr-451 of one subunit and heme P460 of an adjacent subunit. It depends on heme c as a cofactor.

It is found in the anammoxosome. The catalysed reaction is hydroxylamine + 3 Fe(III)-[cytochrome c] = nitric oxide + 3 Fe(II)-[cytochrome c] + 3 H(+). Functionally, catalyzes the oxidation of hydroxylamine to nitric oxide with cytochrome c acting as an electron acceptor. Does not oxidize hydroxylamine to nitrite. Also able to catalyze the four-electron oxidation of hydrazine to N(2) in vitro with reduced efficiency; however, this reaction is probably not physiological. The chain is Hydroxylamine oxidoreductase from Kuenenia stuttgartiensis.